We begin with the raw amino-acid sequence, 227 residues long: Phosphoribosylaminoimidazole-succinocarboxamide synthase (227 aa).

This sequence belongs to the SAICAR synthetase family.

The enzyme catalyses 5-amino-1-(5-phospho-D-ribosyl)imidazole-4-carboxylate + L-aspartate + ATP = (2S)-2-[5-amino-1-(5-phospho-beta-D-ribosyl)imidazole-4-carboxamido]succinate + ADP + phosphate + 2 H(+). The protein operates within purine metabolism; IMP biosynthesis via de novo pathway; 5-amino-1-(5-phospho-D-ribosyl)imidazole-4-carboxamide from 5-amino-1-(5-phospho-D-ribosyl)imidazole-4-carboxylate: step 1/2. This Clostridium tetani (strain Massachusetts / E88) protein is Phosphoribosylaminoimidazole-succinocarboxamide synthase.